We begin with the raw amino-acid sequence, 1040 residues long: Multidrug resistance protein MdtB (1040 aa).

The next 12 membrane-spanning stretches (helical) occupy residues 16-36 (FIMR…AGII), 342-362 (DTQF…YLFL), 369-389 (IIPG…MVFL), 396-416 (LTLM…IVVI), 440-460 (IGFT…PLLF), 472-492 (FAVT…TLTP), 537-557 (WLTL…WVFI), 863-883 (LGST…VLGV), 888-908 (FIHP…ALLA), 911-931 (LAGS…IGIV), 968-988 (ILMT…STGV), and 998-1018 (IGMV…TPVI).

It belongs to the resistance-nodulation-cell division (RND) (TC 2.A.6) family. MdtB subfamily. Part of a tripartite efflux system composed of MdtA, MdtB and MdtC. MdtB forms a heteromultimer with MdtC.

Its subcellular location is the cell inner membrane. This is Multidrug resistance protein MdtB from Klebsiella pneumoniae (strain 342).